The chain runs to 332 residues: Phosphate acyltransferase (332 aa).

This sequence belongs to the PlsX family. In terms of assembly, homodimer. Probably interacts with PlsY.

It localises to the cytoplasm. It catalyses the reaction a fatty acyl-[ACP] + phosphate = an acyl phosphate + holo-[ACP]. The protein operates within lipid metabolism; phospholipid metabolism. Catalyzes the reversible formation of acyl-phosphate (acyl-PO(4)) from acyl-[acyl-carrier-protein] (acyl-ACP). This enzyme utilizes acyl-ACP as fatty acyl donor, but not acyl-CoA. The sequence is that of Phosphate acyltransferase from Bacillus pumilus (strain SAFR-032).